The following is a 1240-amino-acid chain: DNA polymerase catalytic subunit (1240 aa).

The segment covering 1–22 (MFCAAGGPASPGGKPAARAASG) has biased composition (low complexity). 3 disordered regions span residues 1–44 (MFCA…RRQN), 646–695 (GLDK…RETG), and 1103–1139 (AAAP…ASKP). Positions 669 to 688 (NGDEDKDDDEDGDEDGDERE) are enriched in acidic residues.

The protein belongs to the DNA polymerase type-B family. In terms of assembly, forms a complex with the ssDNA-binding protein UL29, the DNA polymerase processivity factor, and the alkaline exonuclease. Interacts with the putative helicase-primase complex subunit UL8; this interaction may coordinate leading and lagging strand DNA synthesis at the replication fork.

It localises to the host nucleus. It catalyses the reaction DNA(n) + a 2'-deoxyribonucleoside 5'-triphosphate = DNA(n+1) + diphosphate. It carries out the reaction Endonucleolytic cleavage to 5'-phosphomonoester.. In terms of biological role, replicates viral genomic DNA. The replication complex is composed of six viral proteins: the DNA polymerase, processivity factor, primase, primase-associated factor, helicase, and ssDNA-binding protein. Additionally, the polymerase contains an intrinsic ribonuclease H (RNase H) activity that specifically degrades RNA/DNA heteroduplexes or duplex DNA substrates in the 5' to 3' direction. Therefore, it can catalyze the excision of the RNA primers that initiate the synthesis of Okazaki fragments at a replication fork during viral DNA replication. The polypeptide is DNA polymerase catalytic subunit (Human herpesvirus 2 (strain HG52) (HHV-2)).